A 240-amino-acid polypeptide reads, in one-letter code: Uridylate kinase (240 aa).

ATP is bound at residue 12-15; the sequence is KLSG. Positions 20–25 are involved in allosteric activation by GTP; sequence GKQGFG. Residue G54 participates in UMP binding. ATP contacts are provided by G55 and R59. Residues D74 and 135–142 contribute to the UMP site; that span reads TGNPYFST. Residues N163, Y169, and D172 each coordinate ATP.

Belongs to the UMP kinase family. Homohexamer.

It is found in the cytoplasm. It catalyses the reaction UMP + ATP = UDP + ADP. It functions in the pathway pyrimidine metabolism; CTP biosynthesis via de novo pathway; UDP from UMP (UMPK route): step 1/1. Its activity is regulated as follows. Allosterically activated by GTP. Inhibited by UTP. Its function is as follows. Catalyzes the reversible phosphorylation of UMP to UDP. This chain is Uridylate kinase, found in Geobacillus thermodenitrificans (strain NG80-2).